The sequence spans 93 residues: MLKPLGDRVVLKIEEKEEKVGGFVIAGNSHAATKTAAVVAVGQGVRTLTGELVAPSVKAGDKVLVESHAGVEVKDGEETYLLVSEANILAIVE.

This sequence belongs to the GroES chaperonin family. In terms of assembly, heptamer of 7 subunits arranged in a ring. Interacts with the chaperonin GroEL.

The protein resides in the cytoplasm. Its function is as follows. Together with the chaperonin GroEL, plays an essential role in assisting protein folding. The GroEL-GroES system forms a nano-cage that allows encapsulation of the non-native substrate proteins and provides a physical environment optimized to promote and accelerate protein folding. GroES binds to the apical surface of the GroEL ring, thereby capping the opening of the GroEL channel. The chain is Co-chaperonin GroES from Streptococcus gordonii.